Consider the following 138-residue polypeptide: Basic phospholipase A2 Sct-N6 (138 aa).

Residues 1–16 form the signal peptide; that stretch reads MRTFWIVAVLLVGVEG. 7 disulfide bridges follow: Cys-42–Cys-131, Cys-44–Cys-60, Cys-59–Cys-111, Cys-65–Cys-138, Cys-66–Cys-104, Cys-73–Cys-97, and Cys-91–Cys-102. Positions 43, 45, and 47 each coordinate Ca(2+). The active site involves His-63. Asp-64 lines the Ca(2+) pocket. Asp-105 is a catalytic residue.

Belongs to the phospholipase A2 family. Group II subfamily. D49 sub-subfamily. Requires Ca(2+) as cofactor. In terms of tissue distribution, expressed by the venom gland.

It is found in the secreted. It catalyses the reaction a 1,2-diacyl-sn-glycero-3-phosphocholine + H2O = a 1-acyl-sn-glycero-3-phosphocholine + a fatty acid + H(+). In terms of biological role, snake venom phospholipase A2 (PLA2) that displays edema-inducing activities, as well as presynaptic neurotoxicity and low myotoxicity. PLA2 catalyzes the calcium-dependent hydrolysis of the 2-acyl groups in 3-sn-phosphoglycerides. The protein is Basic phospholipase A2 Sct-N6 of Sistrurus tergeminus (Western massasauga).